Here is a 272-residue protein sequence, read N- to C-terminus: Cyclase-like protein 2 (272 aa).

An N-terminal signal peptide occupies residues 1 to 24; sequence MAVPPLFFLLTLLSLPSLLISAGA.

This sequence belongs to the Cyclase 1 superfamily.

The protein resides in the secreted. It is found in the extracellular space. Its subcellular location is the extracellular matrix. Its function is as follows. May function redundantly with CYCLASE1 for normal plant growth, development and viability. The protein is Cyclase-like protein 2 of Arabidopsis thaliana (Mouse-ear cress).